A 180-amino-acid chain; its full sequence is Cytochrome b6-f complex iron-sulfur subunit (180 aa).

The chain crosses the membrane as a helical span at residues 21–43 (LLTFGTITGTALGALYPVVKYFI). The Rieske domain maps to 66-162 (VSEYLAKHLP…ATVTEDDKLV (97 aa)). [2Fe-2S] cluster-binding residues include C108, H110, C126, and H129. A disulfide bridge connects residues C113 and C128.

This sequence belongs to the Rieske iron-sulfur protein family. The 4 large subunits of the cytochrome b6-f complex are cytochrome b6, subunit IV (17 kDa polypeptide, PetD), cytochrome f and the Rieske protein, while the 4 small subunits are PetG, PetL, PetM and PetN. The complex functions as a dimer. Requires [2Fe-2S] cluster as cofactor.

It is found in the cellular thylakoid membrane. The catalysed reaction is 2 oxidized [plastocyanin] + a plastoquinol + 2 H(+)(in) = 2 reduced [plastocyanin] + a plastoquinone + 4 H(+)(out). Component of the cytochrome b6-f complex, which mediates electron transfer between photosystem II (PSII) and photosystem I (PSI), cyclic electron flow around PSI, and state transitions. The protein is Cytochrome b6-f complex iron-sulfur subunit of Thermosynechococcus vestitus (strain NIES-2133 / IAM M-273 / BP-1).